A 327-amino-acid chain; its full sequence is Ribosomal RNA large subunit methyltransferase F (327 aa).

The disordered stretch occupies residues 1–31 (MTHPVTPKNTTRPTPANKPAASTLHPRNPHQ).

This sequence belongs to the methyltransferase superfamily. METTL16/RlmF family.

It is found in the cytoplasm. The catalysed reaction is adenosine(1618) in 23S rRNA + S-adenosyl-L-methionine = N(6)-methyladenosine(1618) in 23S rRNA + S-adenosyl-L-homocysteine + H(+). Its function is as follows. Specifically methylates the adenine in position 1618 of 23S rRNA. The protein is Ribosomal RNA large subunit methyltransferase F of Psychrobacter sp. (strain PRwf-1).